The chain runs to 204 residues: Glideosome-associated protein 45 (204 aa).

Residues 1–86 (MGNKCSRSKV…KEEIDYATQE (86 aa)) form a disordered region. G2 is lipidated: N-myristoyl glycine. A targets GAP45 to the cell membrane; however, dispensable for the formation of the glideosome complex and the association with the inner membrane complex region spans residues 2–29 (GNKCSRSKVKEPKRKDIDELAERENLKK). A compositionally biased stretch (basic and acidic residues) spans 9–53 (KVKEPKRKDIDELAERENLKKQSEEIIEEKPEEVVEQVEETHEEP). Positions 54 to 73 (LEQEQELDEQKIEEEEEEPE) are enriched in acidic residues. S89 carries the post-translational modification Phosphoserine; by CPK10. Position 103 is a phosphoserine; by CPK10 and PKB (S103). S149 is modified (phosphoserine; by CPK10).

As to quaternary structure, component of the glideosome complex composed of GAP50, GAP45, MTIP and MyoA; the complex is formed during the late schizont stage and in merozoites. MyoA, MTIP and GAP45 probably form an initial complex in the cytoplasm which is then recruited to the outer face of the inner membrane complex via the interaction with GAP50. Interacts with GAP50; the interaction is independent of GAP45 phosphorylation status and can also occur independently of the formation of the glideosome complex. Phosphorylated at multiple sites. Phosphorylation increases during the schizont stage and peaks in segmented merozoites. May be phosphorylated by PKB. In schizonts, phosphorylated at Ser-89 and Ser-149 in response to phospholipase C-mediated calcium release. Phosphorylation at Ser-149 begins in early schizonts while phosphorylation at Ser-103 begins in late schizonts. Phosphorylation at Ser-89, Ser-103 and Ser-149 appears to be dispensable for GAP45 inner membrane complex localization or GAP45 inclusion in the glideosome complex. Phosphorylation is not required for interaction with GAP50; however, it may regulate the interaction with MTIP and MyoA. Post-translationally, N-myristoylated by NMT. N-myristoylation may contribute to the targeting of GAP45 to the inner membrane complex with the subsequent palmitoylation strengthening the interaction with the membrane. In terms of processing, palmitoylated. Palmitoylation appears to follow N-myristoylation and may strengthen the interaction with the inner membrane complex.

Its subcellular location is the inner membrane complex. Functionally, component of the glideosome complex, an inner membrane complex structure involved in parasite gliding motility and host cell invasion. During the asexual blood stage, required in schizonts to recruit MTIP and MyoA to the inner membrane complex where they assemble with GAP50 to form the glideosome complex. By regulating the formation of the glideosome, plays an essential role during merozoite invasion of host erythrocytes. This is Glideosome-associated protein 45 from Plasmodium falciparum (isolate 3D7).